Reading from the N-terminus, the 254-residue chain is 4-hydroxy-tetrahydrodipicolinate reductase (254 aa).

Residues Gly-8–Met-13, Asp-35, Cys-86–Thr-88, and Ser-110–Met-113 each bind NAD(+). Catalysis depends on His-143, which acts as the Proton donor/acceptor. His-144 contributes to the (S)-2,3,4,5-tetrahydrodipicolinate binding site. The active-site Proton donor is the Lys-147. Position 153–154 (Gly-153–Thr-154) interacts with (S)-2,3,4,5-tetrahydrodipicolinate.

Belongs to the DapB family.

The protein localises to the cytoplasm. The enzyme catalyses (S)-2,3,4,5-tetrahydrodipicolinate + NAD(+) + H2O = (2S,4S)-4-hydroxy-2,3,4,5-tetrahydrodipicolinate + NADH + H(+). The catalysed reaction is (S)-2,3,4,5-tetrahydrodipicolinate + NADP(+) + H2O = (2S,4S)-4-hydroxy-2,3,4,5-tetrahydrodipicolinate + NADPH + H(+). The protein operates within amino-acid biosynthesis; L-lysine biosynthesis via DAP pathway; (S)-tetrahydrodipicolinate from L-aspartate: step 4/4. In terms of biological role, catalyzes the conversion of 4-hydroxy-tetrahydrodipicolinate (HTPA) to tetrahydrodipicolinate. This chain is 4-hydroxy-tetrahydrodipicolinate reductase, found in Clostridium perfringens (strain ATCC 13124 / DSM 756 / JCM 1290 / NCIMB 6125 / NCTC 8237 / Type A).